Here is a 1008-residue protein sequence, read N- to C-terminus: Probable transport protein MmpL10 (1008 aa).

12 consecutive transmembrane segments (helical) span residues 23–43 (WPWV…MTVP), 202–222 (IELV…RNPI), 225–245 (LLPL…VSGV), 257–277 (MIVL…VFLI), 301–321 (ALIS…ITFL), 340–360 (IGIA…LVLA), 389–409 (VAYL…ASLV), 835–855 (DLQL…MALL), 862–882 (IYLV…CVLV), 895–915 (VPGL…MLLA), 940–960 (VITA…LSSI), and 961–981 (ATVV…TFIV).

It belongs to the resistance-nodulation-cell division (RND) (TC 2.A.6) family. MmpL subfamily.

It localises to the cell membrane. This Mycobacterium leprae (strain TN) protein is Probable transport protein MmpL10 (mmpL10).